The primary structure comprises 290 residues: Translin-associated protein X (290 aa).

Residues 1–31 (MNGKEGPGGFRKRKHDTFPHNQRREGKDASL) are disordered. The span at 16-28 (DTFPHNQRREGKD) shows a compositional bias: basic and acidic residues. The interaction with C1D stretch occupies residues 73–208 (LLHRITSAPD…MRMCINSVGN (136 aa)). The Mg(2+) site is built by Glu129 and Glu197. A Glycyl lysine isopeptide (Lys-Gly) (interchain with G-Cter in SUMO2) cross-link involves residue Lys279.

It belongs to the translin family. Ring-shaped heterooctamer of six TSN and two TSNAX subunits. Interacts with GOLGA3, TSNAXIP1, SUN1 and AKAP9. Interacts with the homodimeric form of C1D following gamma-radiation. Interacts with TSN and C1D in a mutually exclusive manner. Sumoylated with SUMO1. In terms of tissue distribution, detected in heart, brain, lung, liver, kidney and testis.

Its subcellular location is the cytoplasm. The protein resides in the perinuclear region. It is found in the golgi apparatus. It localises to the nucleus. Acts in combination with TSN as an endonuclease involved in the activation of the RNA-induced silencing complex (RISC). Possible role in spermatogenesis. This chain is Translin-associated protein X (Tsnax), found in Mus musculus (Mouse).